The sequence spans 102 residues: Aspartyl/glutamyl-tRNA(Asn/Gln) amidotransferase subunit C (102 aa).

The protein belongs to the GatC family. In terms of assembly, heterotrimer of A, B and C subunits.

It carries out the reaction L-glutamyl-tRNA(Gln) + L-glutamine + ATP + H2O = L-glutaminyl-tRNA(Gln) + L-glutamate + ADP + phosphate + H(+). The catalysed reaction is L-aspartyl-tRNA(Asn) + L-glutamine + ATP + H2O = L-asparaginyl-tRNA(Asn) + L-glutamate + ADP + phosphate + 2 H(+). In terms of biological role, allows the formation of correctly charged Asn-tRNA(Asn) or Gln-tRNA(Gln) through the transamidation of misacylated Asp-tRNA(Asn) or Glu-tRNA(Gln) in organisms which lack either or both of asparaginyl-tRNA or glutaminyl-tRNA synthetases. The reaction takes place in the presence of glutamine and ATP through an activated phospho-Asp-tRNA(Asn) or phospho-Glu-tRNA(Gln). This is Aspartyl/glutamyl-tRNA(Asn/Gln) amidotransferase subunit C from Lactobacillus acidophilus (strain ATCC 700396 / NCK56 / N2 / NCFM).